We begin with the raw amino-acid sequence, 556 residues long: MELCGLGLPRPPMLLALLLATLLAAMLALLTQVALVVQVAEAARAPSVSAKPGPALWPLPLLVKMTPNLLHLAPENFYISHSPNSTAGPSCTLLEEAFRRYHGYIFGFYKWHHEPAEFQAKTQVQQLLVSITLQSECDAFPNISSDESYTLLVKEPVAVLKANRVWGALRGLETFSQLVYQDSYGTFTINESTIIDSPRFSHRGILIDTSRHYLPVKIILKTLDAMAFNKFNVLHWHIVDDQSFPYQSITFPELSNKGSYSLSHVYTPNDVRMVIEYARLRGIRVLPEFDTPGHTLSWGKGQKDLLTPCYSRQNKLDSFGPINPTLNTTYSFLTTFFKEISEVFPDQFIHLGGDEVEFKCWESNPKIQDFMRQKGFGTDFKKLESFYIQKVLDIIATINKGSIVWQEVFDDKAKLAPGTIVEVWKDSAYPEELSRVTASGFPVILSAPWYLDLISYGQDWRKYYKVEPLDFGGTQKQKQLFIGGEACLWGEYVDATNLTPRLWPRASAVGERLWSSKDVRDMDDAYDRLTRHRCRMVERGIAAQPLYAGYCNHENM.

A signal peptide spans 1-42 (MELCGLGLPRPPMLLALLLATLLAAMLALLTQVALVVQVAEA). Residues 43-121 (ARAPSVSAKP…HHEPAEFQAK (79 aa)) constitute a propeptide that is removed on maturation. Residue N84 is glycosylated (N-linked (GlcNAc...) asparagine). C91 and C137 form a disulfide bridge. N142, N190, and N327 each carry an N-linked (GlcNAc...) asparagine glycan. 2 disulfides stabilise this stretch: C309–C360 and C534–C551. E355 functions as the Proton donor in the catalytic mechanism.

It belongs to the glycosyl hydrolase 20 family. In terms of assembly, there are 3 forms of beta-hexosaminidase: hexosaminidase A is a heterodimer composed of one subunit alpha and one subunit beta (chain A and B); hexosaminidase B is a homodimer of two beta subunits (two chains A and B); hexosaminidase S is a homodimer of two alpha subunits. The composition of the dimer (isozyme A versus isozyme S) has a significant effect on the substrate specificity of the alpha subunit active site. Post-translationally, N-linked glycans at Asn-142 and Asn-190 consist of Man(3)-GlcNAc(2) and Man(5 to 7)-GlcNAc(2), respectively. The beta-A and beta-B chains are produced by proteolytic processing of the precursor beta chain.

Its subcellular location is the lysosome. The protein resides in the cytoplasmic vesicle. The protein localises to the secretory vesicle. It is found in the cortical granule. It catalyses the reaction Hydrolysis of terminal non-reducing N-acetyl-D-hexosamine residues in N-acetyl-beta-D-hexosaminides.. The catalysed reaction is N-acetyl-beta-D-galactosaminyl-(1-&gt;4)-beta-D-3-sulfogalactosyl-(1-&gt;4)-beta-D-glucosyl-(1&lt;-&gt;1')-ceramide + H2O = a beta-D-3-sulfogalactosyl-(1-&gt;4)-beta-D-glucosyl-(1&lt;-&gt;1')-ceramide + N-acetyl-beta-D-galactosamine. The enzyme catalyses a ganglioside GM2 (d18:1(4E)) + H2O = a ganglioside GM3 (d18:1(4E)) + N-acetyl-beta-D-galactosamine. It carries out the reaction a ganglioside GM2 + H2O = a ganglioside GM3 + N-acetyl-beta-D-galactosamine. It catalyses the reaction beta-D-GalNAc-(1-&gt;4)-alpha-L-IdoA-(1-&gt;3)-beta-D-GalNAc-4-sulfate-(1-&gt;4)-alpha-L-IdoA-(1-&gt;3)-D-GalNAc-4-sulfate + H2O = alpha-L-IdoA-(1-&gt;3)-beta-D-GalNAc-4-sulfate-(1-&gt;4)-alpha-L-IdoA-(1-&gt;3)-D-GalNAc-4-sulfate + N-acetyl-D-galactosamine. The catalysed reaction is N-acetyl-beta-D-6-sulfogalactosaminyl-(1-&gt;4)-alpha-L-iduronyl-(1-&gt;3)-N-acetyl-D-6-sulfogalactosamine + H2O = alpha-L-iduronyl-(1-&gt;3)-N-acetyl-D-6-sulfogalactosamine + N-acetyl-D-6-sulfogalactosamine. Its activity is regulated as follows. Addition of GM2A stimulates the hydrolysis of sulfated glycosphingolipid SM2 and the ganglioside GM2. Functionally, hydrolyzes the non-reducing end N-acetyl-D-hexosamine and/or sulfated N-acetyl-D-hexosamine of glycoconjugates, such as the oligosaccharide moieties from proteins and neutral glycolipids, or from certain mucopolysaccharides. The isozyme B does not hydrolyze each of these substrates, however hydrolyzes efficiently neutral oligosaccharide. Only the isozyme A is responsible for the degradation of GM2 gangliosides in the presence of GM2A. During fertilization is responsible, at least in part, for the zona block to polyspermy. Present in the cortical granules of non-activated oocytes, is exocytosed during the cortical reaction in response to oocyte activation and inactivates the sperm galactosyltransferase-binding site, accounting for the block in sperm binding to the zona pellucida. This is Beta-hexosaminidase subunit beta from Homo sapiens (Human).